A 340-amino-acid chain; its full sequence is Ketol-acid reductoisomerase (NADP(+)) (340 aa).

The region spanning 1–183 (MAITVYYDKD…GGGRTGIIET (183 aa)) is the KARI N-terminal Rossmann domain. NADP(+)-binding positions include 26-29 (FGSQ), Arg-49, Ser-52, Ser-54, and 84-87 (DEIQ). Residue His-109 is part of the active site. Gly-135 serves as a coordination point for NADP(+). Residues 184-329 (TFKAETETDL…RNLRAMMPWI (146 aa)) enclose the KARI C-terminal knotted domain. 4 residues coordinate Mg(2+): Asp-192, Glu-196, Glu-228, and Glu-232. Position 253 (Ser-253) interacts with substrate.

This sequence belongs to the ketol-acid reductoisomerase family. Requires Mg(2+) as cofactor.

It carries out the reaction (2R)-2,3-dihydroxy-3-methylbutanoate + NADP(+) = (2S)-2-acetolactate + NADPH + H(+). The enzyme catalyses (2R,3R)-2,3-dihydroxy-3-methylpentanoate + NADP(+) = (S)-2-ethyl-2-hydroxy-3-oxobutanoate + NADPH + H(+). It participates in amino-acid biosynthesis; L-isoleucine biosynthesis; L-isoleucine from 2-oxobutanoate: step 2/4. Its pathway is amino-acid biosynthesis; L-valine biosynthesis; L-valine from pyruvate: step 2/4. In terms of biological role, involved in the biosynthesis of branched-chain amino acids (BCAA). Catalyzes an alkyl-migration followed by a ketol-acid reduction of (S)-2-acetolactate (S2AL) to yield (R)-2,3-dihydroxy-isovalerate. In the isomerase reaction, S2AL is rearranged via a Mg-dependent methyl migration to produce 3-hydroxy-3-methyl-2-ketobutyrate (HMKB). In the reductase reaction, this 2-ketoacid undergoes a metal-dependent reduction by NADPH to yield (R)-2,3-dihydroxy-isovalerate. The protein is Ketol-acid reductoisomerase (NADP(+)) of Campylobacter jejuni subsp. jejuni serotype O:6 (strain 81116 / NCTC 11828).